A 722-amino-acid chain; its full sequence is Host cell factor 2 (722 aa).

Kelch repeat units lie at residues leucine 34–cysteine 79, arginine 83–histidine 130, lysine 207–asparagine 255, and methionine 257–serine 303. Fibronectin type-III domains lie at alanine 359–serine 460, threonine 514–proline 604, and phenylalanine 606–lysine 716. The interval alanine 398–serine 476 is disordered. Residues glutamine 419 to threonine 436 are compositionally biased toward polar residues.

Binds KMT2A/MLL1. Component of the MLL1/MLL complex, at least composed of KMT2A/MLL1, ASH2L, RBBP5, DPY30, WDR5, MEN1, HCFC1 and HCFC2. Interacts with TASOR. Expressed in the spermatogonia, spermatocytes and ovary.

The protein resides in the cytoplasm. It localises to the nucleus. The chain is Host cell factor 2 (Hcfc2) from Mus musculus (Mouse).